The following is a 521-amino-acid chain: Manganese transporter pdt1 (521 aa).

Residue Ser42 is modified to Phosphoserine. Thr43 is subject to Phosphothreonine. The next 12 membrane-spanning stretches (helical) occupy residues 71–91 (YCKFIGPGFLIAVAYIDPGNY), 104–124 (KLLFIVFLSNLFAVYLQSLCI), 152–172 (VLAEIAIIATDIAEVIGTAVA), 179–199 (IPLVAGVVITILDVLLVLIAW), 210–230 (IFETAVALLVLVVAISFAVVL), 233–253 (VHIGGAGTVFKGFLPSSTVFS), 260–280 (SIGILGATVMPHSLFLGSGLV), 325–345 (LFTFALFTNSSILIVAGAVFY), 373–393 (LFAVALLFSGMSAGYVCTIAG), 417–437 (IAIIPCLVVSAAVGQSGLNQV), 440–460 (ASQVCLSILLPFLTFPLVMFT), and 495–515 (IVTWAIWLFLTALNLLLIVWL).

It belongs to the NRAMP family.

The protein resides in the endoplasmic reticulum membrane. In terms of biological role, transports manganese ions into the cell. Regulates cell morphogenesis through control of manganese homeostasis. The chain is Manganese transporter pdt1 (pdt1) from Schizosaccharomyces pombe (strain 972 / ATCC 24843) (Fission yeast).